A 122-amino-acid chain; its full sequence is Small ribosomal subunit protein uS13 (122 aa).

The tract at residues 97-122 (PVRGQRTKTNARTRKGPARTVAGKKK) is disordered.

It belongs to the universal ribosomal protein uS13 family. Part of the 30S ribosomal subunit. Forms a loose heterodimer with protein S19. Forms two bridges to the 50S subunit in the 70S ribosome.

Functionally, located at the top of the head of the 30S subunit, it contacts several helices of the 16S rRNA. In the 70S ribosome it contacts the 23S rRNA (bridge B1a) and protein L5 of the 50S subunit (bridge B1b), connecting the 2 subunits; these bridges are implicated in subunit movement. Contacts the tRNAs in the A and P-sites. This chain is Small ribosomal subunit protein uS13, found in Geobacter sulfurreducens (strain ATCC 51573 / DSM 12127 / PCA).